Consider the following 153-residue polypeptide: 17.6 kDa class I heat shock protein (153 aa).

The sHSP domain maps to 38–153 (ETAAIVNARI…PMVKAIDISG (116 aa)).

The protein belongs to the small heat shock protein (HSP20) family. In terms of assembly, forms oligomeric structures.

The protein localises to the cytoplasm. This chain is 17.6 kDa class I heat shock protein (HSP17.6), found in Helianthus annuus (Common sunflower).